We begin with the raw amino-acid sequence, 343 residues long: Homeobox protein DBX1 (343 aa).

Disordered regions lie at residues 56–100 and 240–343; these read RSVP…TAFS and KERE…ITVS. The homeobox DNA-binding region spans 181-240; sequence GMLRRAVFSDVQRKALEKMFQKQKYISKPDRKKLAAKLGLKDSQVKIWFQNRRMKWRNSK. The segment covering 314-323 has biased composition (low complexity); the sequence is AHSSSPGKPS. Residues 326–343 are compositionally biased toward acidic residues; it reads SDSEEEEEGEEQEEITVS.

This sequence belongs to the H2.0 homeobox family.

It localises to the nucleus. Could have a role in patterning the central nervous system during embryogenesis. Has a key role in regulating the distinct phenotypic features that distinguish two major classes of ventral interneurons, V0 and V1 neurons. Regulates the transcription factor profile, neurotransmitter phenotype, intraspinal migratory path and axonal trajectory of V0 neurons, features that differentiate them from an adjacent set of V1 neurons. This chain is Homeobox protein DBX1 (DBX1), found in Homo sapiens (Human).